The chain runs to 87 residues: DNA-directed RNA polymerase subunit Rpo5 (87 aa).

It belongs to the archaeal Rpo5/eukaryotic RPB5 RNA polymerase subunit family. In terms of assembly, part of the RNA polymerase complex.

It is found in the cytoplasm. It catalyses the reaction RNA(n) + a ribonucleoside 5'-triphosphate = RNA(n+1) + diphosphate. In terms of biological role, DNA-dependent RNA polymerase (RNAP) catalyzes the transcription of DNA into RNA using the four ribonucleoside triphosphates as substrates. This Thermoplasma acidophilum (strain ATCC 25905 / DSM 1728 / JCM 9062 / NBRC 15155 / AMRC-C165) protein is DNA-directed RNA polymerase subunit Rpo5.